A 233-amino-acid chain; its full sequence is Nuclear speckle RNA-binding protein A (233 aa).

3 disordered regions span residues 1–54 (MADG…VPDT), 68–92 (VQSG…GGNV), and 214–233 (FLRL…RGRR). The span at 71 to 91 (GEGGSVSMGRSGGGGGGGGGN) shows a compositional bias: gly residues. One can recognise an RRM domain in the interval 136–222 (NTLYVEGLPS…KFLRLQFSRK (87 aa)).

As to expression, expressed in root meristems, lateral root primordia and root vascular tissues.

The protein resides in the nucleus speckle. Functionally, alternative splicing (AS) regulator that binds to specific mRNAs and modulates auxin effects on the transcriptome. Displaced from its targets upon binding to AS competitor long non-coding RNA (ASCO-RNA). This is Nuclear speckle RNA-binding protein A from Arabidopsis thaliana (Mouse-ear cress).